Reading from the N-terminus, the 489-residue chain is Rhamnulokinase (489 aa).

13 to 17 (ASSGR) lines the ATP pocket. Cysteine 68 and cysteine 222 are oxidised to a cystine. Substrate contacts are provided by residues glycine 83 and 236–238 (HDT). Aspartate 237 acts as the Proton acceptor in catalysis. Threonine 259 contributes to the ATP binding site. Asparagine 296 provides a ligand contact to substrate. Glutamine 304 provides a ligand contact to ATP. A disulfide bridge links cysteine 353 with cysteine 370. Position 402 (glycine 402) interacts with ATP. A disulfide bridge connects residues cysteine 413 and cysteine 417.

Belongs to the rhamnulokinase family. Requires Mg(2+) as cofactor.

The catalysed reaction is L-rhamnulose + ATP = L-rhamnulose 1-phosphate + ADP + H(+). Its pathway is carbohydrate degradation; L-rhamnose degradation; glycerone phosphate from L-rhamnose: step 2/3. Functionally, involved in the catabolism of L-rhamnose (6-deoxy-L-mannose). Catalyzes the transfer of the gamma-phosphate group from ATP to the 1-hydroxyl group of L-rhamnulose to yield L-rhamnulose 1-phosphate. The protein is Rhamnulokinase of Salmonella paratyphi B (strain ATCC BAA-1250 / SPB7).